The sequence spans 55 residues: Large ribosomal subunit protein bL33A (55 aa).

This sequence belongs to the bacterial ribosomal protein bL33 family.

The sequence is that of Large ribosomal subunit protein bL33A from Mycobacterium sp. (strain KMS).